The chain runs to 440 residues: MKRLARSLYLQVLLAVVLGALVGHLFPATGASLKPLGDGFIKLVKMLIAPIVFATVVTGIAKMGDLRKVGRVGLKGLLYFEVLTTVALAIGLVVARLARPGAGMNVDPATLDTKAIASYTNGAQAHGTVDFLMNVIPRDVADAFARGDILQVLLFSVLFGAALAALKDKGRPVLEFVDGLSLVLFRIVGFVMRLAPVGAFGAMAFTVGKYGIATLLSLGKLIACFYATSALFVVLMLGLVLRWCGLSLFRFLRYIKEEIFVVLGTSSSESALPLMMRKMEKLGCSKPVVGLVVPMGYSFNLDGTSIYLTLATLFIAQATNTHVTLVQELEILAVLLLTSKGAAAVTGGGFITLAATLSAVGNIPVAGLALLLGVDRFMSEARAITNLIGNGVASVAVSRWEGELDQARARAVLAGTVPEEVEPANEPEPPAVPAGAGLHG.

Transmembrane regions (helical) follow at residues 8-28, 40-60, 74-94, 147-167, 187-207, 221-241, 288-308, and 354-374; these read LYLQ…LFPA, FIKL…VTGI, LKGL…GLVV, GDIL…AALK, IVGF…AFTV, LIAC…GLVL, VVGL…SIYL, and AATL…LLGV. The segment at 419 to 440 is disordered; it reads EEVEPANEPEPPAVPAGAGLHG.

This sequence belongs to the dicarboxylate/amino acid:cation symporter (DAACS) (TC 2.A.23) family.

It localises to the cell inner membrane. Responsible for the transport of dicarboxylates such as succinate, fumarate, and malate from the periplasm across the membrane. The sequence is that of C4-dicarboxylate transport protein from Anaeromyxobacter dehalogenans (strain 2CP-1 / ATCC BAA-258).